A 398-amino-acid polypeptide reads, in one-letter code: Ureide permease 2 (398 aa).

At 1 to 10 (MYLVESKGGA) the chain is on the extracellular side. Residues 11–31 (IACMLLALLSLGTWPAVLTLL) traverse the membrane as a helical segment. The Cytoplasmic segment spans residues 32 to 44 (ERRGRLPQHTYLD). Residues 45–65 (YSITNLLAAIIIAFTFGQIGS) form a helical membrane-spanning segment. The Extracellular portion of the chain corresponds to 66-81 (TKPDSPNFITQLAQDN). The helical transmembrane segment at 82-102 (WPSVMFAMAGGIVLSLGNLST) threads the bilayer. Over 103 to 104 (QY) the chain is Cytoplasmic. The helical transmembrane segment at 105-125 (AWALVGLSVTEVITSSITVVI) threads the bilayer. At 126 to 139 (GSTLNYFLDDKINK) the chain is on the extracellular side. A helical membrane pass occupies residues 140-160 (AEILFPGVACFLIAVCLGSAV). Over 161–229 (HRSNADDNKA…RAIKVFGKRK (69 aa)) the chain is Cytoplasmic. The tract at residues 176–200 (ETAKQEASGPSTEIGTNSSKDLETN) is disordered. Over residues 183–200 (SGPSTEIGTNSSKDLETN) the composition is skewed to polar residues. 221-228 (AIKVFGKR) contacts ATP. The helical transmembrane segment at 230–250 (IIGLAITFFAGLCFSLFSPAF) threads the bilayer. Over 251 to 272 (NLATNDQWNRLKQGVPKLVVYT) the chain is Extracellular. The helical transmembrane segment at 273–293 (AFFYFSVSCFIIALILNVVFL) threads the bilayer. Residues 294-315 (YYPVLGLPKSSFKAYLNDWNGR) are Cytoplasmic-facing. Residues 316 to 336 (YWAFLAGFLCGFGNGLQFMGG) traverse the membrane as a helical segment. At 337–341 (QAAGY) the chain is on the extracellular side. A helical transmembrane segment spans residues 342–362 (AAADSVQALPLVSTFWGVVLF). Over 363–371 (GEYRRSSRK) the chain is Cytoplasmic. Residues 372 to 392 (TYLLLFCMLFMFISAVAVLMA) form a helical membrane-spanning segment. Topologically, residues 393–398 (SSGHRK) are extracellular.

This sequence belongs to the plant ureide permease (TC 2.A.7.19) family. In terms of tissue distribution, expressed in root xylem, cotyledons and leaves. Expressed in leaf blades, petioles, trichomes, stems, flower stigma, the upper part of pedicels, sepals, and the top and bottom parts of carpels in siliques.

The protein resides in the membrane. Functionally, proton-coupled transporter that transports a wide spectrum of oxo derivatives of heterocyclic nitrogen compounds, including allantoin, uric acid and xanthine, but not adenine. Mediates high affinity transport of uracil and 5-fluorouracil (a toxic uracil analog). Mediates transport of free pyrimidines and may function during early seedling development in salvage pathways, by the utilization of pyrimidines from seed storage tissue. This is Ureide permease 2 from Arabidopsis thaliana (Mouse-ear cress).